Reading from the N-terminus, the 697-residue chain is Alpha-1,4-glucan:maltose-1-phosphate maltosyltransferase (697 aa).

Position 284 (Lys-284) interacts with alpha-maltose 1-phosphate. The tract at residues 286-305 is disordered; it reads RNNSVTAAPGDVGSPWAIGS. Alpha-maltose 1-phosphate is bound by residues Gln-344 and Asp-379. The active-site Nucleophile is Asp-414. An alpha-maltose 1-phosphate-binding site is contributed by Asn-415. Glu-443 serves as the catalytic Proton donor. 553–554 provides a ligand contact to alpha-maltose 1-phosphate; it reads KY.

It belongs to the glycosyl hydrolase 13 family. GlgE subfamily. In terms of assembly, homodimer.

It carries out the reaction alpha-maltose 1-phosphate + [(1-&gt;4)-alpha-D-glucosyl](n) = [(1-&gt;4)-alpha-D-glucosyl](n+2) + phosphate. The protein operates within glycan biosynthesis; glycogen biosynthesis. The transfer reaction from maltose-1-P to glycogen is inhibited by micromolar amounts of inorganic phosphate or arsenate but is only slightly inhibited by millimolar concentrations of glucose-1-P, glucose-6-P, or inorganic pyrophosphate. Is also inhibited by ATP, by 1,4-dideoxy-1,4-imino-D-arabinitol (DIA), but not by isofagomine. Functionally, maltosyltransferase that uses maltose 1-phosphate (M1P) as the sugar donor to elongate linear or branched alpha-(1-&gt;4)-glucans. Is also able to catalyze the reverse reaction in vitro. Cannot use glucose 1-phosphate as substrate. Is involved in a branched alpha-glucan biosynthetic pathway from trehalose, together with TreS, Mak and GlgB. This is Alpha-1,4-glucan:maltose-1-phosphate maltosyltransferase (glgE) from Mycolicibacterium smegmatis (strain ATCC 700084 / mc(2)155) (Mycobacterium smegmatis).